Reading from the N-terminus, the 1588-residue chain is Paternally-expressed gene 3 protein (1588 aa).

Residues 46-128 (HQRFRNLIYV…TLLENYKEMY (83 aa)) form the SCAN box domain. Disordered stretches follow at residues 128–231 (YQPE…YQNV), 265–304 (GHSH…RRGI), and 317–347 (KFIK…MSDD). Residues 129 to 142 (QPEDDNNSDVTSDD) are compositionally biased toward acidic residues. 4 stretches are compositionally biased toward basic and acidic residues: residues 143-152 (DMTRNRRESS), 160-181 (FSDR…DRWS), 205-224 (FEMD…RSQD), and 293-304 (PEAKKSTHRRGI). 3 C2H2-type zinc fingers span residues 452–474 (YVCD…QIMH), 505–527 (FECK…RKIH), and 563–585 (YECR…QKIH). The span at 588–607 (DDKDNEREHERERERERGET) shows a compositional bias: basic and acidic residues. The segment at 588–608 (DDKDNEREHERERERERGETF) is disordered. The C2H2-type 4 zinc-finger motif lies at 627–649 (YECKVCGETFLHSSSLKEHQKIH). Disordered regions lie at residues 839-889 (VASK…SKNR) and 905-929 (QKSV…SSNV). Basic and acidic residues predominate over residues 868 to 881 (LNDKRQKIPARENP). The segment at 969–991 (YECQECGECFAHSSDLTEHQKIH) adopts a C2H2-type 5 zinc-finger fold. The tract at residues 1056–1104 (EKSHGEESQGENTDGEETHSEETHGQETIEDPVIQGSDMEDPQKDDPDD) is disordered. A compositionally biased stretch (basic and acidic residues) spans 1071–1082 (EETHSEETHGQE). 5 C2H2-type zinc fingers span residues 1107-1129 (YECE…QKVH), 1163-1185 (YECP…QRIH), 1225-1247 (IRCL…MRLH), 1282-1304 (FECA…VTVH), and 1332-1354 (YECK…KELH). Residues 1396–1415 (EPEVEAAEPEVEAAEPEVEA) are compositionally biased toward acidic residues. A disordered region spans residues 1396–1495 (EPEVEAAEPE…GIEDPEEGED (100 aa)). 7 tandem repeats follow at residues 1397–1403 (PEVEAAE), 1404–1410 (PEVEAAE), 1411–1417 (PEVEAAE), 1418–1422 (PNGEA), 1425–1429 (PDGEA), 1432–1436 (PIGEA), and 1439–1443 (PNGEA). The segment at 1397-1417 (PEVEAAEPEVEAAEPEVEAAE) is 3 X 7 AA repeat of P-E-V-E-A-A-E. Residues 1418-1443 (PNGEAEGPDGEAAEPIGEAGQPNGEA) form a 4 X 5 AA repeat of P-X-G-E-A region. Acidic residues-rich tracts occupy residues 1449-1466 (DADE…ERAE) and 1475-1495 (PEGD…EGED). 2 C2H2-type zinc fingers span residues 1505–1527 (YDCH…LKTH) and 1564–1586 (FKCD…QNTH).

The protein belongs to the krueppel C2H2-type zinc-finger protein family. In terms of assembly, homodimer. Interacts with SIAH1A and SIAH2. Interacts with TRAF2. As to expression, brain, glial cells, astrocytes, embryo, placenta, testis, ovary and uterus. In the placenta it is found in the layer of villous cytotrophoblast cells while in the ovary it is found in the cells of the ovarian stroma including the thecal layers around the follicles. Expression is highly repressed in glioma cell lines.

It is found in the nucleus. The protein localises to the cytoplasm. Its function is as follows. Induces apoptosis in cooperation with SIAH1A. Acts as a mediator between p53/TP53 and BAX in a neuronal death pathway that is activated by DNA damage. Acts synergistically with TRAF2 and inhibits TNF induced apoptosis through activation of NF-kappa-B. Possesses a tumor suppressing activity in glioma cells. This Homo sapiens (Human) protein is Paternally-expressed gene 3 protein (PEG3).